A 160-amino-acid polypeptide reads, in one-letter code: Single-stranded DNA-binding protein (160 aa).

Binds to single-stranded DNA (ssDNA). Has a regulatory effect on phage DNA metabolism and transcription of early genes. This is Single-stranded DNA-binding protein (XII) from Enterobacteria phage PRD1 (Bacteriophage PRD1).